A 615-amino-acid chain; its full sequence is Sodium-dependent neutral amino acid transporter B(0)AT3 (615 aa).

The Cytoplasmic portion of the chain corresponds to 1 to 26 (MAQASGMDPLVDIEDERPKWDNKLQY). The chain crosses the membrane as a helical span at residues 27–47 (LLSCIGFAVGLGNIWRFPYLC). Over 48–52 (QTHGG) the chain is Extracellular. Residues 53 to 73 (GAFLIPYFIALVFEGIPLFYI) form a helical membrane-spanning segment. Residues 74-105 (ELAIGQRLRRGSIGVWKTISPYLGGVGLGCFS) lie on the Cytoplasmic side of the membrane. The helical transmembrane segment at 106-126 (VSFLVSLYYNTVLLWVLWFFL) threads the bilayer. The Extracellular segment spans residues 127–177 (NSFQHPLPWSTCPLDLNRTGFVQECQSSGTVSYFWYRQTLNITSDISNTGT). N-linked (GlcNAc...) asparagine glycans are attached at residues asparagine 143 and asparagine 167. The chain crosses the membrane as a helical span at residues 178–198 (IQWKLFLCLVACWSTVYLCVI). Topologically, residues 199 to 206 (RGIESTGK) are cytoplasmic. Residues 207 to 227 (VIYFTALFPYLVLTIFLIRGL) form a helical membrane-spanning segment. Residues 228–255 (TLPGATEGLIYLFTPNMKTLQNPRVWLD) lie on the Extracellular side of the membrane. Residues 256-276 (AATQIFFSLSLAFGGHIAFAS) form a helical membrane-spanning segment. The Cytoplasmic segment spans residues 277-288 (YNPPRNNCEKDA). Residues 289 to 309 (VIIALVNSMTSLYASIAIFSV) form a helical membrane-spanning segment. The Extracellular portion of the chain corresponds to 310-397 (MGFKASNDYG…FTEAVLHMPG (88 aa)). N-linked (GlcNAc...) asparagine glycosylation is present at asparagine 353. A helical transmembrane segment spans residues 398-418 (ASVWSVLFFGMLFTLGLSSMF). Topologically, residues 419–441 (GNMEGVITPLLDMGILPKGIPKE) are cytoplasmic. The chain crosses the membrane as a helical span at residues 442–462 (VMTGVICFACFLSAICFTLQS). The Extracellular segment spans residues 463-472 (GGYWLEIFDS). A helical transmembrane segment spans residues 473–493 (FAASLNLIIFAFMEVVGVIHI). Topologically, residues 494 to 520 (YGMKRFCDDIEWMTGRRPGLYWQVTWR) are cytoplasmic. Residues 521–541 (VVSPMLLFGIFLSYIVLLIQT) traverse the membrane as a helical segment. Residues 542–570 (PPSYKAWNPQYEHFPSREEKFYPGWVQVT) lie on the Extracellular side of the membrane. The helical transmembrane segment at 571–591 (CVLLSFLPSLWVPGVALAQLL) threads the bilayer. The Cytoplasmic portion of the chain corresponds to 592–615 (SQYKQRWKATHLESGLKLQESRGC).

It belongs to the sodium:neurotransmitter symporter (SNF) (TC 2.A.22) family. SLC6A18 subfamily. Interacts with CLTRN; this interaction regulates the trafficking of SLC6A18 to the cell membrane and its activity. Expressed predominantly in kidney.

The protein resides in the apical cell membrane. It localises to the cell membrane. It catalyses the reaction L-alanine(out) + chloride(out) + 2 Na(+)(out) = L-alanine(in) + chloride(in) + 2 Na(+)(in). The catalysed reaction is glycine(out) + chloride(out) + 2 Na(+)(out) = glycine(in) + chloride(in) + 2 Na(+)(in). It carries out the reaction L-methionine(out) + chloride(out) + 2 Na(+)(out) = L-methionine(in) + chloride(in) + 2 Na(+)(in). The enzyme catalyses L-valine(out) + chloride(out) + 2 Na(+)(out) = L-valine(in) + chloride(in) + 2 Na(+)(in). It catalyses the reaction L-isoleucine(out) + chloride(out) + 2 Na(+)(out) = L-isoleucine(in) + chloride(in) + 2 Na(+)(in). The catalysed reaction is L-serine(out) + chloride(out) + 2 Na(+)(out) = L-serine(in) + chloride(in) + 2 Na(+)(in). It carries out the reaction L-leucine(out) + chloride(out) + 2 Na(+)(out) = L-leucine(in) + chloride(in) + 2 Na(+)(in). Symporter that transports one amino acid molecule together with two sodium and one chloride ions in kidneys and plays a role in the neutral amino acids reabsorption. Preferentially transports neutral amino acids such as L-glycine and L-alanine but also other neutral amino acids. Required CLTRN for cell surface expression and for its amino acid transporter activity. The transport mechanism is pH-independent. This is Sodium-dependent neutral amino acid transporter B(0)AT3 from Mus musculus (Mouse).